A 254-amino-acid chain; its full sequence is Serotonin N-acetyltransferase 1, chloroplastic (254 aa).

The N-terminal 74 residues, 1–74 (MAPAASASAS…LRSGFLKSNN (74 aa)), are a transit peptide targeting the chloroplast. An N-acetyltransferase domain is found at 111–254 (IIFSSAGDVN…IKGMFWYPRF (144 aa)).

This sequence belongs to the acetyltransferase family. Expressed in roots and shoots.

It is found in the plastid. The protein localises to the chloroplast. Its subcellular location is the nucleus. The catalysed reaction is serotonin + acetyl-CoA = N-acetylserotonin + CoA + H(+). It catalyses the reaction tyramine + acetyl-CoA = N-acetyltyramine + CoA + H(+). It carries out the reaction tryptamine + acetyl-CoA = N-acetyltryptamine + CoA + H(+). The enzyme catalyses 5-methoxytryptamine + acetyl-CoA = melatonin + CoA + H(+). It participates in aromatic compound metabolism; melatonin biosynthesis; melatonin from serotonin: step 1/2. Catalyzes the N-acetylation of serotonin into N-acetylserotonin, the penultimate step in the synthesis of melatonin. Catalyzes in vitro the N-acetylation of tryptamine to produce N-acetyltryptamine, 5-methoxytryptamine to produce melatonin and tyramine to produce N-acetyltyramine. This is Serotonin N-acetyltransferase 1, chloroplastic from Oryza sativa subsp. japonica (Rice).